The primary structure comprises 66 residues: Protein translocase subunit SecE (66 aa).

A helical transmembrane segment spans residues 29–49; the sequence is LVASTLVVVVAVFIFSLTCLV.

Belongs to the SecE/SEC61-gamma family. In terms of assembly, component of the Sec protein translocase complex. Heterotrimer consisting of SecY, SecE and SecG subunits. The heterotrimers can form oligomers, although 1 heterotrimer is thought to be able to translocate proteins. Interacts with the ribosome. Interacts with SecDF, and other proteins may be involved. Interacts with SecA.

Its subcellular location is the cell inner membrane. Essential subunit of the Sec protein translocation channel SecYEG. Clamps together the 2 halves of SecY. May contact the channel plug during translocation. The chain is Protein translocase subunit SecE from Rickettsia rickettsii.